We begin with the raw amino-acid sequence, 166 residues long: AP-3 complex subunit sigma (166 aa).

The protein belongs to the adaptor complexes small subunit family. As to quaternary structure, adaptor protein complex 3 (AP-3) is a heterotetramer composed of two large adaptins (delta-type subunit and beta-type subunit), a medium adaptin (mu-type subunit) and a small adaptin (sigma-type subunit).

The protein localises to the cytoplasm. The protein resides in the golgi apparatus. It localises to the cytoplasmic vesicle membrane. Functionally, part of the AP-3 complex, an adaptor-related complex which seems to be clathrin-associated. The complex is associated with the Golgi region as well as more peripheral structures. It facilitates the budding of vesicles from the Golgi membrane and may be directly involved in trafficking to the vacuole. It also function in maintaining the identity of lytic vacuoles and in regulating the transition between storage and lytic vacuoles. The sequence is that of AP-3 complex subunit sigma from Arabidopsis thaliana (Mouse-ear cress).